A 366-amino-acid chain; its full sequence is Ribosomal RNA large subunit methyltransferase M (366 aa).

S-adenosyl-L-methionine contacts are provided by residues Ser188, 221-224 (CPGG), Asp240, Asp260, and Asp277. Lys306 acts as the Proton acceptor in catalysis.

The protein belongs to the class I-like SAM-binding methyltransferase superfamily. RNA methyltransferase RlmE family. RlmM subfamily. As to quaternary structure, monomer.

The protein resides in the cytoplasm. The catalysed reaction is cytidine(2498) in 23S rRNA + S-adenosyl-L-methionine = 2'-O-methylcytidine(2498) in 23S rRNA + S-adenosyl-L-homocysteine + H(+). Its function is as follows. Catalyzes the 2'-O-methylation at nucleotide C2498 in 23S rRNA. The sequence is that of Ribosomal RNA large subunit methyltransferase M from Salmonella arizonae (strain ATCC BAA-731 / CDC346-86 / RSK2980).